The primary structure comprises 240 residues: Phosphoribosylaminoimidazole-succinocarboxamide synthase (240 aa).

This sequence belongs to the SAICAR synthetase family.

It carries out the reaction 5-amino-1-(5-phospho-D-ribosyl)imidazole-4-carboxylate + L-aspartate + ATP = (2S)-2-[5-amino-1-(5-phospho-beta-D-ribosyl)imidazole-4-carboxamido]succinate + ADP + phosphate + 2 H(+). It participates in purine metabolism; IMP biosynthesis via de novo pathway; 5-amino-1-(5-phospho-D-ribosyl)imidazole-4-carboxamide from 5-amino-1-(5-phospho-D-ribosyl)imidazole-4-carboxylate: step 1/2. The chain is Phosphoribosylaminoimidazole-succinocarboxamide synthase from Limosilactobacillus fermentum (strain NBRC 3956 / LMG 18251) (Lactobacillus fermentum).